Consider the following 141-residue polypeptide: Protein C19orf12 homolog (141 aa).

Residues 33 to 53 (LVAAAGAFLGGLVGGPPGIAV) form a helical membrane-spanning segment.

This sequence belongs to the C19orf12 family.

It localises to the mitochondrion. Its subcellular location is the mitochondrion membrane. The protein resides in the endoplasmic reticulum. It is found in the cytoplasm. The protein localises to the cytosol. This chain is Protein C19orf12 homolog, found in Xenopus tropicalis (Western clawed frog).